A 131-amino-acid polypeptide reads, in one-letter code: D-ribose pyranase (131 aa).

Catalysis depends on H20, which acts as the Proton donor. Substrate-binding positions include D28, H98, and 120–122 (YAN).

Belongs to the RbsD / FucU family. RbsD subfamily. As to quaternary structure, homodecamer.

It is found in the cytoplasm. The catalysed reaction is beta-D-ribopyranose = beta-D-ribofuranose. The protein operates within carbohydrate metabolism; D-ribose degradation; D-ribose 5-phosphate from beta-D-ribopyranose: step 1/2. Functionally, catalyzes the interconversion of beta-pyran and beta-furan forms of D-ribose. The chain is D-ribose pyranase from Bacillus anthracis (strain A0248).